The primary structure comprises 1525 residues: Dicer-like protein 1 (1525 aa).

Over residues 37 to 52 (DLQEDDGSSDESDNDE) the composition is skewed to acidic residues. The interval 37–65 (DLQEDDGSSDESDNDEREDHSKTGVSQQR) is disordered. Positions 124–305 (LFERAKVQNT…DEATRLEKLL (182 aa)) constitute a Helicase ATP-binding domain. 137–144 (LDTGSGKT) is an ATP binding site. The DEAH box motif lies at 250-253 (DEAH). The Helicase C-terminal domain maps to 439-605 (QLSPKVQVLR…SFCRTLPEDR (167 aa)). One can recognise a Dicer dsRNA-binding fold domain in the interval 641-731 (ATAILARYAS…NSIYHRRLPA (91 aa)). The PAZ domain maps to 881 to 1009 (ESLTYVRDND…ICIEPLKVSA (129 aa)). RNase III domains follow at residues 1032–1192 (LISL…LSGG) and 1243–1394 (SRKI…VDSD). Mg(2+) contacts are provided by Glu1283, Asp1380, and Glu1383. In terms of domain architecture, DRBM spans 1428-1496 (TFLHNRLTNE…SEKALAVLDE (69 aa)). Residues Cys1440, His1467, Cys1508, and Cys1510 each coordinate Zn(2+).

The protein belongs to the helicase family. Dicer subfamily. Mg(2+) is required as a cofactor. It depends on Mn(2+) as a cofactor.

In terms of biological role, dicer-like endonuclease involved in cleaving double-stranded RNA in the RNA interference (RNAi) pathway. Produces 21 to 25 bp dsRNAs (siRNAs) which target the selective destruction of homologous RNAs leading to sequence-specific suppression of gene expression, called post-transcriptional gene silencing (PTGS). Part of a broad host defense response against viral infection and transposons. The sequence is that of Dicer-like protein 1 (dcl1) from Aspergillus niger (strain ATCC MYA-4892 / CBS 513.88 / FGSC A1513).